The sequence spans 511 residues: Trigger factor (511 aa).

In terms of domain architecture, PPIase FKBP-type spans 168-253 (GDLLTIDFVG…VKEVKAPAEV (86 aa)). Positions 446–511 (DEHEHHHHDH…KAPAKKKKED (66 aa)) are disordered. The segment covering 455-478 (HDHDHDHDHDHDHGHDHDHGDEKP) has biased composition (basic and acidic residues). A compositionally biased stretch (basic residues) spans 479-488 (KKKPAAKKAA). Basic and acidic residues predominate over residues 489-498 (AKSDDGEAKP). The span at 499–511 (AAKKAPAKKKKED) shows a compositional bias: basic residues.

The protein belongs to the FKBP-type PPIase family. Tig subfamily.

The protein localises to the cytoplasm. The catalysed reaction is [protein]-peptidylproline (omega=180) = [protein]-peptidylproline (omega=0). Functionally, involved in protein export. Acts as a chaperone by maintaining the newly synthesized protein in an open conformation. Functions as a peptidyl-prolyl cis-trans isomerase. This is Trigger factor from Parvibaculum lavamentivorans (strain DS-1 / DSM 13023 / NCIMB 13966).